The sequence spans 133 residues: UPF0047 protein Rv2556c (133 aa).

It belongs to the UPF0047 family.

The chain is UPF0047 protein Rv2556c from Mycobacterium tuberculosis (strain ATCC 25618 / H37Rv).